We begin with the raw amino-acid sequence, 353 residues long: Protein pelota homolog (353 aa).

The protein belongs to the eukaryotic release factor 1 family. Pelota subfamily. Monomer. A divalent metal cation is required as a cofactor.

The protein localises to the cytoplasm. May function in recognizing stalled ribosomes, interact with stem-loop structures in stalled mRNA molecules, and effect endonucleolytic cleavage of the mRNA. May play a role in the release non-functional ribosomes and degradation of damaged mRNAs. Has endoribonuclease activity. This Methanobrevibacter smithii (strain ATCC 35061 / DSM 861 / OCM 144 / PS) protein is Protein pelota homolog.